The sequence spans 943 residues: Synaptotagmin-like protein 2 (943 aa).

One can recognise a RabBD domain in the interval 1-57; sequence MIDLSFLTEEEQEAIMKVLQRDAALKRAEEERVRHLPEKVKDDQQLKNMSGQWFYEA. Disordered regions lie at residues 77–99, 118–291, and 361–613; these read RKKRPQVADEQSKDRANRAKESW, EEPE…VRFH, and ESDR…SNSG. A compositionally biased stretch (basic and acidic residues) spans 82 to 99; the sequence is QVADEQSKDRANRAKESW. Positions 125–138 are enriched in low complexity; sequence APASPSSSVVNPVS. Positions 174-192 are enriched in polar residues; the sequence is SQQTKNEQSKNGKTGLFQT. A compositionally biased stretch (basic and acidic residues) spans 194-205; that stretch reads KEGELSESKEES. Composition is skewed to polar residues over residues 382 to 394, 404 to 416, and 426 to 440; these read PQPSQYTNGLPFQ, KNETSQPTTSGSF, and EFLTTRAQSTENSHT. Over residues 524-537 the composition is skewed to basic and acidic residues; the sequence is ELVRSAEDDQKADQ. Polar residues predominate over residues 549–560; it reads STVSSQPDNQFS. Low complexity predominate over residues 603-613; that stretch reads SSLTNLSSNSG. C2 domains lie at 637–762 and 777–906; these read VKGS…LKWY and NRGE…VDWM.

Monomer. Binds NRXN1. Binds RAB27A that has been activated by GTP-binding via its N-terminus. Interacts with RAB27B.

The protein resides in the cell membrane. May act as a RAB27A effector protein and play a role in cytotoxic granule exocytosis in lymphocytes. The polypeptide is Synaptotagmin-like protein 2 (SYTL2) (Bos taurus (Bovine)).